Here is a 342-residue protein sequence, read N- to C-terminus: Dihydroorotate dehydrogenase (quinone) (342 aa).

Residues 60–64 (AGFDK) and T84 each bind FMN. K64 contacts substrate. 109–113 (NRMGF) is a substrate binding site. 2 residues coordinate FMN: N137 and N170. A substrate-binding site is contributed by N170. S173 functions as the Nucleophile in the catalytic mechanism. N175 contacts substrate. 2 residues coordinate FMN: K215 and T243. 244 to 245 (NT) is a substrate binding site. Residues G266, G295, and 316 to 317 (YT) each bind FMN.

This sequence belongs to the dihydroorotate dehydrogenase family. Type 2 subfamily. Monomer. The cofactor is FMN.

It is found in the cell membrane. It carries out the reaction (S)-dihydroorotate + a quinone = orotate + a quinol. It participates in pyrimidine metabolism; UMP biosynthesis via de novo pathway; orotate from (S)-dihydroorotate (quinone route): step 1/1. In terms of biological role, catalyzes the conversion of dihydroorotate to orotate with quinone as electron acceptor. This chain is Dihydroorotate dehydrogenase (quinone), found in Halorhodospira halophila (strain DSM 244 / SL1) (Ectothiorhodospira halophila (strain DSM 244 / SL1)).